A 318-amino-acid polypeptide reads, in one-letter code: Beta-ketoacyl-[acyl-carrier-protein] synthase III (318 aa).

Catalysis depends on residues Cys-112 and His-245. Residues 246 to 250 form an ACP-binding region; it reads QANIR. Asn-275 is a catalytic residue.

This sequence belongs to the thiolase-like superfamily. FabH family. As to quaternary structure, homodimer.

The protein resides in the cytoplasm. The catalysed reaction is malonyl-[ACP] + acetyl-CoA + H(+) = 3-oxobutanoyl-[ACP] + CO2 + CoA. It functions in the pathway lipid metabolism; fatty acid biosynthesis. Functionally, catalyzes the condensation reaction of fatty acid synthesis by the addition to an acyl acceptor of two carbons from malonyl-ACP. Catalyzes the first condensation reaction which initiates fatty acid synthesis and may therefore play a role in governing the total rate of fatty acid production. Possesses both acetoacetyl-ACP synthase and acetyl transacylase activities. Its substrate specificity determines the biosynthesis of branched-chain and/or straight-chain of fatty acids. This chain is Beta-ketoacyl-[acyl-carrier-protein] synthase III, found in Rickettsia conorii (strain ATCC VR-613 / Malish 7).